The chain runs to 242 residues: Probable 2-phosphosulfolactate phosphatase (242 aa).

Belongs to the ComB family. The cofactor is Mg(2+).

The catalysed reaction is (2R)-O-phospho-3-sulfolactate + H2O = (2R)-3-sulfolactate + phosphate. This is Probable 2-phosphosulfolactate phosphatase from Synechococcus sp. (strain JA-3-3Ab) (Cyanobacteria bacterium Yellowstone A-Prime).